A 422-amino-acid polypeptide reads, in one-letter code: MILVKDAIINGKKQNMLVEGNIIKKIGNISNSEVSKDETEIIDGKNCVLIPGLINTHTHVPMSLFRGVADDIPLMDWLSGHIWPMESKLNEKIVYAGTLLGTIEMIKSGTTAFNDMYFFLDSIIKAVDETGIRSTIAYGMIDLFDEEKREKELKTARESLEMIKNLNNSRITGALGPHAPYTCSKEILESTNALAREFNVPIHIHMNETLDEINQVVERTGMRPFEYLNSFGFFEDVTTICAHCVHLSDSEIQIMKEKNMFAAHNPVSNLKLASGVSPVLKLLENNIPVTLGTDGCGSNNNMNLFEEIKAVALIHKGVNLNPVAVTAKEAFEFGTKNGAKALNINSGEIKEGKLADFVLINMKKPYLTPKENIESHLVYSFNGVVDTVVIDGKIVLNAGKMVNIDEEKVYELAEEAYFELAK.

Positions 57 and 59 each coordinate Zn(2+). Substrate-binding residues include glutamate 86 and histidine 178. Histidine 205 contacts Zn(2+). Positions 208 and 294 each coordinate substrate. A Zn(2+)-binding site is contributed by aspartate 294.

This sequence belongs to the metallo-dependent hydrolases superfamily. MTA/SAH deaminase family. In terms of assembly, homotetramer. Zn(2+) serves as cofactor.

It carries out the reaction 5'-deoxyadenosine + H2O + H(+) = 5'-deoxyinosine + NH4(+). It catalyses the reaction S-adenosyl-L-homocysteine + H2O + H(+) = S-inosyl-L-homocysteine + NH4(+). The catalysed reaction is S-methyl-5'-thioadenosine + H2O + H(+) = S-methyl-5'-thioinosine + NH4(+). The enzyme catalyses adenosine + H2O + H(+) = inosine + NH4(+). It participates in amino-acid biosynthesis; S-adenosyl-L-methionine biosynthesis. Functionally, catalyzes the deamination of three SAM-derived enzymatic products, namely 5'-deoxyadenosine, S-adenosyl-L-homocysteine, and 5'-methylthioadenosine, to produce the inosine analogs. Can also deaminate adenosine. The preferred substrate for this enzyme is 5'-deoxyadenosine, but all these substrates are efficiently deaminated. Likely functions in a S-adenosyl-L-methionine (SAM) recycling pathway from S-adenosyl-L-homocysteine (SAH) produced from SAM-dependent methylation reactions. May also be involved in the recycling of 5'-deoxyadenosine, whereupon the 5'-deoxyribose moiety of 5'-deoxyinosine is further metabolized to deoxyhexoses used for the biosynthesis of aromatic amino acids in methanogens. The protein is 5'-deoxyadenosine deaminase of Methanococcus maripaludis (strain C5 / ATCC BAA-1333).